Reading from the N-terminus, the 852-residue chain is Genome polyprotein (852 aa).

2 consecutive short sequence motifs ((L)YPX(n)L motif) follow at residues 167–171 (YPHGL) and 200–205 (YPVWEL). The tract at residues 766–836 (MMSRIAAGDL…PRKMKGLFSQ (71 aa)) is involved in P1-2A pentamerization.

This sequence belongs to the picornaviridae polyprotein family. As to quaternary structure, homodimer. Homomultimer; probably interacts with membranes in a multimeric form. Seems to assemble into amyloid-like fibers. In terms of assembly, homopentamer. Homooligomer. Interacts with capsid protein VP2. Interacts with capsid protein VP3. As to quaternary structure, interacts with capsid protein VP1. Interacts with capsid protein VP3. In terms of assembly, interacts with capsid protein VP1. Interacts with capsid protein VP2. In terms of processing, specific enzymatic cleavages by viral protease in vivo yield a variety of precursors and mature proteins. Polyprotein processing intermediates are produced, such as P1-2A which is a functional precursor of the structural proteins, VP0 which is a VP4-VP2 precursor, VP1-2A precursor, 3ABC precursor which is a stable and catalytically active precursor of 3A, 3B and 3C proteins, 3AB and 3CD precursors. The assembly signal 2A is removed from VP1-2A by a host protease, possibly host Cathepsin L. This cleavage occurs over a region of 3 amino-acids probably generating VP1 proteins with heterogeneous C-termini. Post-translationally, during virion maturation, immature virions are rendered infectious following cleavage of VP0 into VP4 and VP2. This maturation seems to be an autocatalytic event triggered by the presence of RNA in the capsid and is followed by a conformational change of the particle. The assembly signal 2A is removed from VP1-2A by a host protease, possibly host Cathepsin L in naked virions. This cleavage does not occur in enveloped virions. This cleavage occurs over a region of 3 amino-acids probably generating VP1 proteins with heterogeneous C-termini. In terms of processing, viral protein genome-linked: VPg is uridylylated prior to priming replication into VPg-pUpU. Post-translationally, unlike other picornaviruses, does not seem to be myristoylated.

The protein localises to the virion. The protein resides in the host endosome. Its subcellular location is the host multivesicular body. It is found in the host membrane. Its function is as follows. Capsid proteins VP1, VP2, and VP3 form a closed capsid enclosing the viral positive strand RNA genome. All these proteins contain a beta-sheet structure called beta-barrel jelly roll. Together they form an icosahedral capsid (T=3) composed of 60 copies of each VP1, VP2, and VP3, with a diameter of approximately 300 Angstroms. VP1 is situated at the 12 fivefold axes, whereas VP2 and VP3 are located at the quasi-sixfold axes. The naked capsid interacts with the host receptor HAVCR1 to provide virion attachment to and probably entry into the target cell. In terms of biological role, VP0 precursor is a component of the immature procapsids. Plays a role in the assembly of the 12 pentamers into an icosahedral structure. Has not been detected in mature virions, supposedly owing to its small size. Functionally, precursor component of immature procapsids that corresponds to an extended form of the structural protein VP1. After maturation, possibly by the host Cathepsin L, the assembly signal 2A is cleaved to give rise to the mature VP1 protein. Its function is as follows. Affects membrane integrity and causes an increase in membrane permeability. In terms of biological role, functions as a viroporin. Affects membrane integrity and causes an increase in membrane permeability. Involved in host intracellular membrane rearrangements probably to give rise to the viral factories. Does not disrupt calcium homeostasis or glycoprotein trafficking. Antagonizes the innate immune response of the host by suppressing IFN-beta synthesis, which it achieves by interfering with the RIG-I/IFIH1 pathway. In Cercopithecus hamlyni (Owl-faced monkey), this protein is Genome polyprotein.